The following is a 110-amino-acid chain: UPF0060 membrane protein Psyc_0916 (110 aa).

4 consecutive transmembrane segments (helical) span residues 7–27, 33–53, 63–83, and 87–107; these read VGLFAITALAEIAGCYLPYLW, SIWLLIPGALSLVAFVWLLSL, AAYGGVYISMAILWLWTVNGI, and TWDIVGSVVALIGMAIIMFAP.

The protein belongs to the UPF0060 family.

The protein localises to the cell inner membrane. The polypeptide is UPF0060 membrane protein Psyc_0916 (Psychrobacter arcticus (strain DSM 17307 / VKM B-2377 / 273-4)).